A 139-amino-acid polypeptide reads, in one-letter code: Galactoside-binding soluble lectin 13 (139 aa).

Residues 6 to 138 (VPYKLPVSLS…DISLTSVCVC (133 aa)) enclose the Galectin domain.

As to quaternary structure, homodimer; disulfide-linked. Detected in adult and fetal spleen, fetal kidney, adult urinary bladder and placenta. Placental expression originates predominantly from the syncytiotrophoblast.

The protein resides in the cytoplasm. It is found in the nucleus matrix. Binds beta-galactoside and lactose. Strong inducer of T-cell apoptosis. Has hemagglutinating activity towards chicken erythrocytes. This is Galactoside-binding soluble lectin 13 (LGALS13) from Homo sapiens (Human).